Here is a 481-residue protein sequence, read N- to C-terminus: Cysteine--tRNA ligase (481 aa).

Cys-43 provides a ligand contact to Zn(2+). A 'HIGH' region motif is present at residues Ala-45–His-55. Zn(2+) contacts are provided by Cys-221, His-246, and Glu-250. Positions Lys-277–Ser-281 match the 'KMSKS' region motif. An ATP-binding site is contributed by Lys-280.

It belongs to the class-I aminoacyl-tRNA synthetase family. Monomer. Zn(2+) serves as cofactor.

It localises to the cytoplasm. It carries out the reaction tRNA(Cys) + L-cysteine + ATP = L-cysteinyl-tRNA(Cys) + AMP + diphosphate. In Mycobacterium sp. (strain JLS), this protein is Cysteine--tRNA ligase.